The sequence spans 117 residues: Fluoride-specific ion channel FluC 1 (117 aa).

4 helical membrane-spanning segments follow: residues 1 to 21 (MIHI…RAWL), 35 to 55 (IATL…YGIA), 60 to 80 (LFSL…STLS), and 97 to 117 (FSYS…GYSI). Residues Gly71 and Thr74 each contribute to the Na(+) site.

This sequence belongs to the fluoride channel Fluc/FEX (TC 1.A.43) family.

It localises to the cell membrane. It carries out the reaction fluoride(in) = fluoride(out). With respect to regulation, na(+) is not transported, but it plays an essential structural role and its presence is essential for fluoride channel function. Fluoride-specific ion channel. Important for reducing fluoride concentration in the cell, thus reducing its toxicity. The sequence is that of Fluoride-specific ion channel FluC 1 from Staphylococcus haemolyticus (strain JCSC1435).